The chain runs to 780 residues: Copper-exporting P-type ATPase (780 aa).

The 66-residue stretch at 2-67 (QRIQLNITGM…AVRRAALCTD (66 aa)) folds into the HMA domain. Cu(+) is bound by residues C13 and C16. 6 helical membrane-spanning segments follow: residues 89 to 109 (LAVAAALFVPLAHLSVMFAVL), 114 to 134 (FPGWEWMLTALAIPVVTWAAW), 153 to 173 (TLISTGITAATIWSLYTVFGH), 185 to 205 (ALLGSDAIYFEVAAGITVFVL), 348 to 368 (VFVPCVFAVAALTAVGWLIAG), and 374 to 394 (VFSAAIAVLVIACPCALGLAT). The 4-aspartylphosphate intermediate role is filled by D430. The next 2 helical transmembrane spans lie at 680–698 (FNMVWAFGYNIAAIPIAAA) and 704–722 (LVAGAAMAFSSFFVVSNSL).

The protein belongs to the cation transport ATPase (P-type) (TC 3.A.3) family. Type IB subfamily.

The protein localises to the cell membrane. It carries out the reaction Cu(+)(in) + ATP + H2O = Cu(+)(out) + ADP + phosphate + H(+). Involved in copper export. The polypeptide is Copper-exporting P-type ATPase (ctpA) (Mycobacterium leprae (strain TN)).